We begin with the raw amino-acid sequence, 356 residues long: Glycerol-1-phosphate dehydrogenase [NAD(P)+] (356 aa).

NAD(+)-binding positions include 103 to 107 and 125 to 128; these read GRSID and TAAS. Asp130 lines the substrate pocket. An NAD(+)-binding site is contributed by Ser134. Asp177 provides a ligand contact to substrate. Zn(2+) contacts are provided by Asp177 and His257. His261 provides a ligand contact to substrate. His273 lines the Zn(2+) pocket.

The protein belongs to the glycerol-1-phosphate dehydrogenase family. The cofactor is Zn(2+).

The protein resides in the cytoplasm. It catalyses the reaction sn-glycerol 1-phosphate + NAD(+) = dihydroxyacetone phosphate + NADH + H(+). It carries out the reaction sn-glycerol 1-phosphate + NADP(+) = dihydroxyacetone phosphate + NADPH + H(+). It functions in the pathway membrane lipid metabolism; glycerophospholipid metabolism. In terms of biological role, catalyzes the NAD(P)H-dependent reduction of dihydroxyacetonephosphate (DHAP or glycerone phosphate) to glycerol 1-phosphate (G1P). The G1P thus generated is used as the glycerophosphate backbone of phospholipids in the cellular membranes of Archaea. The chain is Glycerol-1-phosphate dehydrogenase [NAD(P)+] from Methanosarcina mazei (strain ATCC BAA-159 / DSM 3647 / Goe1 / Go1 / JCM 11833 / OCM 88) (Methanosarcina frisia).